We begin with the raw amino-acid sequence, 90 residues long: Probable Fe(2+)-trafficking protein (90 aa).

It belongs to the Fe(2+)-trafficking protein family.

In terms of biological role, could be a mediator in iron transactions between iron acquisition and iron-requiring processes, such as synthesis and/or repair of Fe-S clusters in biosynthetic enzymes. This is Probable Fe(2+)-trafficking protein from Methylococcus capsulatus (strain ATCC 33009 / NCIMB 11132 / Bath).